Reading from the N-terminus, the 384-residue chain is S-adenosylmethionine synthase (384 aa).

Residue histidine 15 participates in ATP binding. Mg(2+) is bound at residue aspartate 17. Position 43 (glutamate 43) interacts with K(+). Positions 56 and 99 each coordinate L-methionine. Positions 99 to 109 are flexible loop; sequence QSPDINQGVDR. ATP contacts are provided by residues 164-166, 230-231, aspartate 239, 245-246, alanine 262, and lysine 266; these read DAK, RF, and RK. Aspartate 239 is an L-methionine binding site. Lysine 270 lines the L-methionine pocket.

This sequence belongs to the AdoMet synthase family. In terms of assembly, homotetramer; dimer of dimers. Requires Mg(2+) as cofactor. K(+) is required as a cofactor.

It localises to the cytoplasm. It catalyses the reaction L-methionine + ATP + H2O = S-adenosyl-L-methionine + phosphate + diphosphate. Its pathway is amino-acid biosynthesis; S-adenosyl-L-methionine biosynthesis; S-adenosyl-L-methionine from L-methionine: step 1/1. Its function is as follows. Catalyzes the formation of S-adenosylmethionine (AdoMet) from methionine and ATP. The overall synthetic reaction is composed of two sequential steps, AdoMet formation and the subsequent tripolyphosphate hydrolysis which occurs prior to release of AdoMet from the enzyme. The polypeptide is S-adenosylmethionine synthase (Salmonella arizonae (strain ATCC BAA-731 / CDC346-86 / RSK2980)).